A 487-amino-acid chain; its full sequence is Glutamate--tRNA ligase (487 aa).

Positions 11-21 (PSPTGYPHLGN) match the 'HIGH' region motif. Residues cysteine 108, cysteine 110, cysteine 135, and aspartate 137 each coordinate Zn(2+). The 'KMSKS' region signature appears at 245–249 (KLSKR). Lysine 248 lines the ATP pocket.

Belongs to the class-I aminoacyl-tRNA synthetase family. Glutamate--tRNA ligase type 1 subfamily. Monomer. Requires Zn(2+) as cofactor.

The protein localises to the cytoplasm. It carries out the reaction tRNA(Glu) + L-glutamate + ATP = L-glutamyl-tRNA(Glu) + AMP + diphosphate. In terms of biological role, catalyzes the attachment of glutamate to tRNA(Glu) in a two-step reaction: glutamate is first activated by ATP to form Glu-AMP and then transferred to the acceptor end of tRNA(Glu). The polypeptide is Glutamate--tRNA ligase (Dehalococcoides mccartyi (strain ATCC BAA-2100 / JCM 16839 / KCTC 5957 / BAV1)).